The following is a 288-amino-acid chain: Bifunctional protein FolD (288 aa).

NADP(+) is bound by residues 166–168 (GAS) and Ile-232.

Belongs to the tetrahydrofolate dehydrogenase/cyclohydrolase family. As to quaternary structure, homodimer.

The catalysed reaction is (6R)-5,10-methylene-5,6,7,8-tetrahydrofolate + NADP(+) = (6R)-5,10-methenyltetrahydrofolate + NADPH. The enzyme catalyses (6R)-5,10-methenyltetrahydrofolate + H2O = (6R)-10-formyltetrahydrofolate + H(+). It participates in one-carbon metabolism; tetrahydrofolate interconversion. Catalyzes the oxidation of 5,10-methylenetetrahydrofolate to 5,10-methenyltetrahydrofolate and then the hydrolysis of 5,10-methenyltetrahydrofolate to 10-formyltetrahydrofolate. This Escherichia coli O8 (strain IAI1) protein is Bifunctional protein FolD.